The sequence spans 384 residues: Erythronate-4-phosphate dehydrogenase (384 aa).

Substrate contacts are provided by serine 45 and threonine 66. The NAD(+) site is built by aspartate 147 and threonine 177. Residue arginine 210 is part of the active site. NAD(+) is bound at residue aspartate 234. Glutamate 239 is a catalytic residue. Histidine 256 acts as the Proton donor in catalysis. Glycine 259 contacts NAD(+). Residue tyrosine 260 coordinates substrate.

Belongs to the D-isomer specific 2-hydroxyacid dehydrogenase family. PdxB subfamily. In terms of assembly, homodimer.

The protein localises to the cytoplasm. It catalyses the reaction 4-phospho-D-erythronate + NAD(+) = (R)-3-hydroxy-2-oxo-4-phosphooxybutanoate + NADH + H(+). It participates in cofactor biosynthesis; pyridoxine 5'-phosphate biosynthesis; pyridoxine 5'-phosphate from D-erythrose 4-phosphate: step 2/5. Catalyzes the oxidation of erythronate-4-phosphate to 3-hydroxy-2-oxo-4-phosphonooxybutanoate. The chain is Erythronate-4-phosphate dehydrogenase from Marinobacter nauticus (strain ATCC 700491 / DSM 11845 / VT8) (Marinobacter aquaeolei).